A 242-amino-acid polypeptide reads, in one-letter code: Octanoyltransferase (242 aa).

The region spanning 31 to 206 is the BPL/LPL catalytic domain; sequence SQTTDEIWFL…LFLKNFGYNQ (176 aa). Substrate-binding positions include 70-77, 137-139, and 150-152; these read RGGQVTYH, SIG, and GLA. The active-site Acyl-thioester intermediate is Cys-168.

The protein belongs to the LipB family.

The protein localises to the cytoplasm. The enzyme catalyses octanoyl-[ACP] + L-lysyl-[protein] = N(6)-octanoyl-L-lysyl-[protein] + holo-[ACP] + H(+). Its pathway is protein modification; protein lipoylation via endogenous pathway; protein N(6)-(lipoyl)lysine from octanoyl-[acyl-carrier-protein]: step 1/2. Catalyzes the transfer of endogenously produced octanoic acid from octanoyl-acyl-carrier-protein onto the lipoyl domains of lipoate-dependent enzymes. Lipoyl-ACP can also act as a substrate although octanoyl-ACP is likely to be the physiological substrate. In Coxiella burnetii (strain CbuK_Q154) (Coxiella burnetii (strain Q154)), this protein is Octanoyltransferase.